The chain runs to 266 residues: Putative peptidyl-prolyl cis-trans isomerase NifM (266 aa).

The PpiC domain occupies 124–221 (PEQRLTRHLL…LGWHLLWCEA (98 aa)).

The protein belongs to the PpiC/parvulin rotamase family.

The enzyme catalyses [protein]-peptidylproline (omega=180) = [protein]-peptidylproline (omega=0). Functionally, required for the activation and stabilization of the iron-component (NifH) of nitrogenase. Probable PPIase. The sequence is that of Putative peptidyl-prolyl cis-trans isomerase NifM (nifM) from Klebsiella oxytoca.